Consider the following 327-residue polypeptide: Spermidine/putrescine import ATP-binding protein PotA (327 aa).

Positions 5–235 (IKVEAVEKHF…PKTLFVATFI (231 aa)) constitute an ABC transporter domain. Residue 37–44 (GPSGCGKT) coordinates ATP.

Belongs to the ABC transporter superfamily. Spermidine/putrescine importer (TC 3.A.1.11.1) family. As to quaternary structure, the complex is composed of two ATP-binding proteins (PotA), two transmembrane proteins (PotB and PotC) and a solute-binding protein (PotD).

It is found in the cell membrane. It catalyses the reaction ATP + H2O + polyamine-[polyamine-binding protein]Side 1 = ADP + phosphate + polyamineSide 2 + [polyamine-binding protein]Side 1.. Its function is as follows. Part of the ABC transporter complex PotABCD involved in spermidine/putrescine import. Responsible for energy coupling to the transport system. The polypeptide is Spermidine/putrescine import ATP-binding protein PotA (Bacillus cereus (strain ATCC 14579 / DSM 31 / CCUG 7414 / JCM 2152 / NBRC 15305 / NCIMB 9373 / NCTC 2599 / NRRL B-3711)).